We begin with the raw amino-acid sequence, 204 residues long: Glycerol-3-phosphate acyltransferase (204 aa).

The next 5 helical transmembrane spans lie at Met8–Phe28, Val53–Ala73, Phe81–Gly101, Phe116–Ile136, and Val155–Leu175.

Belongs to the PlsY family. In terms of assembly, probably interacts with PlsX.

It localises to the cell inner membrane. It catalyses the reaction an acyl phosphate + sn-glycerol 3-phosphate = a 1-acyl-sn-glycero-3-phosphate + phosphate. The protein operates within lipid metabolism; phospholipid metabolism. Catalyzes the transfer of an acyl group from acyl-phosphate (acyl-PO(4)) to glycerol-3-phosphate (G3P) to form lysophosphatidic acid (LPA). This enzyme utilizes acyl-phosphate as fatty acyl donor, but not acyl-CoA or acyl-ACP. The polypeptide is Glycerol-3-phosphate acyltransferase (Francisella philomiragia subsp. philomiragia (strain ATCC 25017 / CCUG 19701 / FSC 153 / O#319-036)).